Consider the following 462-residue polypeptide: Integrator complex subunit 12 (462 aa).

The segment at leucine 39 to valine 132 is disordered. Positions isoleucine 59–valine 86 are enriched in polar residues. A Glycyl lysine isopeptide (Lys-Gly) (interchain with G-Cter in SUMO2) cross-link involves residue lysine 68. A compositionally biased stretch (basic and acidic residues) spans threonine 88–threonine 125. Residue serine 128 is modified to Phosphoserine. The PHD-type zinc finger occupies glycine 159 to glutamine 215. Lysine 254 is covalently cross-linked (Glycyl lysine isopeptide (Lys-Gly) (interchain with G-Cter in SUMO2)). Polar residues predominate over residues proline 305–glutamine 328. Residues proline 305–lysine 462 are disordered. Composition is skewed to low complexity over residues lysine 347–valine 358 and valine 382–serine 431. Residues glycine 434–asparagine 443 are compositionally biased toward polar residues. Positions glutamine 449–lysine 462 are enriched in basic residues.

The protein belongs to the Integrator subunit 12 family. Component of the Integrator complex, composed of core subunits INTS1, INTS2, INTS3, INTS4, INTS5, INTS6, INTS7, INTS8, INTS9/RC74, INTS10, INTS11/CPSF3L, INTS12, INTS13, INTS14 and INTS15. The core complex associates with protein phosphatase 2A subunits PPP2CA and PPP2R1A, to form the Integrator-PP2A (INTAC) complex. In terms of processing, dephosphorylated at Ser-128 by the PNUTS-PP1 complex, promoting RNA polymerase II transcription pause-release.

The protein localises to the nucleus. Functionally, component of the integrator complex, a multiprotein complex that terminates RNA polymerase II (Pol II) transcription in the promoter-proximal region of genes. The integrator complex provides a quality checkpoint during transcription elongation by driving premature transcription termination of transcripts that are unfavorably configured for transcriptional elongation: the complex terminates transcription by (1) catalyzing dephosphorylation of the C-terminal domain (CTD) of Pol II subunit POLR2A/RPB1 and SUPT5H/SPT5, (2) degrading the exiting nascent RNA transcript via endonuclease activity and (3) promoting the release of Pol II from bound DNA. The integrator complex is also involved in terminating the synthesis of non-coding Pol II transcripts, such as enhancer RNAs (eRNAs), small nuclear RNAs (snRNAs), telomerase RNAs and long non-coding RNAs (lncRNAs). Mediates recruitment of cytoplasmic dynein to the nuclear envelope, probably as component of the integrator complex. This Bos taurus (Bovine) protein is Integrator complex subunit 12 (INTS12).